The sequence spans 473 residues: Fumarate hydratase class II (473 aa).

Residues serine 105–threonine 107, histidine 130–aspartate 133, serine 140–asparagine 142, and threonine 188 each bind substrate. The active-site Proton donor/acceptor is the histidine 189. Residue serine 319 is part of the active site. Substrate is bound by residues serine 320 and lysine 325–asparagine 327.

The protein belongs to the class-II fumarase/aspartase family. Fumarase subfamily. Homotetramer.

The protein localises to the cytoplasm. The catalysed reaction is (S)-malate = fumarate + H2O. It participates in carbohydrate metabolism; tricarboxylic acid cycle; (S)-malate from fumarate: step 1/1. Involved in the TCA cycle. Catalyzes the stereospecific interconversion of fumarate to L-malate. This Xylella fastidiosa (strain Temecula1 / ATCC 700964) protein is Fumarate hydratase class II.